A 372-amino-acid chain; its full sequence is Carbamoyl phosphate synthase small chain (372 aa).

Residues 1–186 form a CPSase region; it reads MTYCKRGTEG…IHQNNSPDII (186 aa). Residues Ser-52, Gly-233, and Gly-235 each coordinate L-glutamine. Residues 185-372 enclose the Glutamine amidotransferase type-1 domain; that stretch reads IIVLVDCGIK…KKMVIKDEGN (188 aa). The Nucleophile role is filled by Cys-261. The L-glutamine site is built by Leu-262, Gln-265, Asn-303, Gly-305, and Tyr-306. Active-site residues include His-345 and Glu-347.

Belongs to the CarA family. As to quaternary structure, composed of two chains; the small (or glutamine) chain promotes the hydrolysis of glutamine to ammonia, which is used by the large (or ammonia) chain to synthesize carbamoyl phosphate. Tetramer of heterodimers (alpha,beta)4.

It catalyses the reaction hydrogencarbonate + L-glutamine + 2 ATP + H2O = carbamoyl phosphate + L-glutamate + 2 ADP + phosphate + 2 H(+). It carries out the reaction L-glutamine + H2O = L-glutamate + NH4(+). It participates in amino-acid biosynthesis; L-arginine biosynthesis; carbamoyl phosphate from bicarbonate: step 1/1. The protein operates within pyrimidine metabolism; UMP biosynthesis via de novo pathway; (S)-dihydroorotate from bicarbonate: step 1/3. Small subunit of the glutamine-dependent carbamoyl phosphate synthetase (CPSase). CPSase catalyzes the formation of carbamoyl phosphate from the ammonia moiety of glutamine, carbonate, and phosphate donated by ATP, constituting the first step of 2 biosynthetic pathways, one leading to arginine and/or urea and the other to pyrimidine nucleotides. The small subunit (glutamine amidotransferase) binds and cleaves glutamine to supply the large subunit with the substrate ammonia. In Metallosphaera sedula (strain ATCC 51363 / DSM 5348 / JCM 9185 / NBRC 15509 / TH2), this protein is Carbamoyl phosphate synthase small chain.